The following is a 335-amino-acid chain: MLALGKLLELTLTDHEPAEKTQVTPKGARLRWLGEGALEVRPAESEDCGLDLLLSAGIHGNETAPIELLERLLHGVANGKIKPRARLLFLFGNPVAIRKGERFIEQDINRLFNGRHELSSGFEALRAAELEQFARVFFSKPGRSRLHYDLHTAIRGSKIEQFALYPYKEGRKHSRRELARLAAAGMEAVLLQSKSSITFSAFTYEQLDAEAFTLELGKARPFGQNEQVNLDKLEERLIRIIEATEPEGESSLDGLQLFSVSREIIKHSDSFHLHLPADIENFSELSKGYLLAEDLAEMRWVVEEEGARIIFPNPKVRNGLRAGILIVPDSGQRLG.

3 residues coordinate Zn(2+): H59, E62, and H151. The active site involves E215.

It belongs to the AspA/AstE family. Succinylglutamate desuccinylase subfamily. It depends on Zn(2+) as a cofactor.

The enzyme catalyses N-succinyl-L-glutamate + H2O = L-glutamate + succinate. It participates in amino-acid degradation; L-arginine degradation via AST pathway; L-glutamate and succinate from L-arginine: step 5/5. In terms of biological role, transforms N(2)-succinylglutamate into succinate and glutamate. The protein is Succinylglutamate desuccinylase of Pseudomonas putida (strain GB-1).